A 313-amino-acid polypeptide reads, in one-letter code: MMLVELLSGVISCVCALLAVAFFTLLERKGLGYFQLRKGPNKVGLMGLPQPLADAVKLFTEELVKPTLVNVFPFLVCPAMSLFLALVLWILYNNYFVCSMGGLSMLLFLCVSSLGVYSVMGAGWFSNSKYALLGSVRAVAQSISYEVSMSLILMSCLLLVGSMSLSMIMKYQFFVWVAFVNFFMMLMWFVSCVAETHRAPFDFAEGESELVSGFNTEYGGVGFALLFMAEYGNILFMSVLVISLFFGGVVFVGVFGMGLCVMVSFVGWLFIWVRASYPRYRYDLLMYLIWKSYLPSVLSILMFLVVSVYILNG.

The next 8 membrane-spanning stretches (helical) occupy residues 6 to 26 (LLSGVISCVCALLAVAFFTLL), 71 to 91 (VFPFLVCPAMSLFLALVLWIL), 105 to 125 (MLLFLCVSSLGVYSVMGAGWF), 149 to 169 (MSLILMSCLLLVGSMSLSMIM), 173 to 193 (FFVWVAFVNFFMMLMWFVSCV), 220 to 242 (GVGFALLFMAEYGNILFMSVLVI), 255 to 275 (FGMGLCVMVSFVGWLFIWVRA), and 293 to 313 (YLPSVLSILMFLVVSVYILNG).

The protein belongs to the complex I subunit 1 family.

The protein localises to the mitochondrion inner membrane. It catalyses the reaction a ubiquinone + NADH + 5 H(+)(in) = a ubiquinol + NAD(+) + 4 H(+)(out). Its function is as follows. Core subunit of the mitochondrial membrane respiratory chain NADH dehydrogenase (Complex I) that is believed to belong to the minimal assembly required for catalysis. Complex I functions in the transfer of electrons from NADH to the respiratory chain. The immediate electron acceptor for the enzyme is believed to be ubiquinone. In Heterololigo bleekeri (Spear squid), this protein is NADH-ubiquinone oxidoreductase chain 1 (ND1).